The chain runs to 453 residues: Phosphomannomutase (453 aa).

S96 acts as the Phosphoserine intermediate in catalysis. S96, D243, D245, and D247 together coordinate Mg(2+).

Belongs to the phosphohexose mutase family. Mg(2+) is required as a cofactor.

It catalyses the reaction alpha-D-mannose 1-phosphate = D-mannose 6-phosphate. It participates in nucleotide-sugar biosynthesis; GDP-alpha-D-mannose biosynthesis; alpha-D-mannose 1-phosphate from D-fructose 6-phosphate: step 2/2. The protein operates within bacterial outer membrane biogenesis; LPS O-antigen biosynthesis. Its function is as follows. Involved in GDP-mannose biosynthesis which serves as the activated sugar nucleotide precursor for mannose residues in cell surface polysaccharides. This enzyme participates in synthesis of the LPS O7 antigen. This Escherichia coli protein is Phosphomannomutase (manB).